The following is a 373-amino-acid chain: Dual-specificity RNA methyltransferase RlmN (373 aa).

Glu-94 serves as the catalytic Proton acceptor. The region spanning 100-339 is the Radical SAM core domain; that stretch reads EDDRATLCVS…VIVRKTRGDD (240 aa). Residues Cys-107 and Cys-344 are joined by a disulfide bond. Cys-114, Cys-118, and Cys-121 together coordinate [4Fe-4S] cluster. Residues 168 to 169, Ser-200, 222 to 224, and Asn-301 contribute to the S-adenosyl-L-methionine site; these read GE and SIH. The S-methylcysteine intermediate role is filled by Cys-344.

It belongs to the radical SAM superfamily. RlmN family. [4Fe-4S] cluster is required as a cofactor.

Its subcellular location is the cytoplasm. The catalysed reaction is adenosine(2503) in 23S rRNA + 2 reduced [2Fe-2S]-[ferredoxin] + 2 S-adenosyl-L-methionine = 2-methyladenosine(2503) in 23S rRNA + 5'-deoxyadenosine + L-methionine + 2 oxidized [2Fe-2S]-[ferredoxin] + S-adenosyl-L-homocysteine. It carries out the reaction adenosine(37) in tRNA + 2 reduced [2Fe-2S]-[ferredoxin] + 2 S-adenosyl-L-methionine = 2-methyladenosine(37) in tRNA + 5'-deoxyadenosine + L-methionine + 2 oxidized [2Fe-2S]-[ferredoxin] + S-adenosyl-L-homocysteine. Its function is as follows. Specifically methylates position 2 of adenine 2503 in 23S rRNA and position 2 of adenine 37 in tRNAs. m2A2503 modification seems to play a crucial role in the proofreading step occurring at the peptidyl transferase center and thus would serve to optimize ribosomal fidelity. This chain is Dual-specificity RNA methyltransferase RlmN, found in Shewanella woodyi (strain ATCC 51908 / MS32).